A 249-amino-acid chain; its full sequence is T-cell immunoreceptor with Ig and ITIM domains (249 aa).

The first 28 residues, Met1 to Gly28, serve as a signal peptide directing secretion. Residues Thr29 to Leu127 form the Ig-like V-type domain. Topologically, residues Thr29–Gly148 are extracellular. Residues Asn35–Ile45 form a homodimerization region. Cysteines 48 and 111 form a disulfide. Asn104 is a glycosylation site (N-linked (GlcNAc...) asparagine). A helical transmembrane segment spans residues Gly149–Ala169. The Cytoplasmic portion of the chain corresponds to Arg170–Gly249. Residues Ser182–Asp222 form a disordered region. Positions Asn195–Ala211 are enriched in polar residues. The ITIM motif motif lies at Leu234–Leu239.

As to quaternary structure, homodimer in cis; binds with high affinity to PVR, forming a heterotetrameric assembly of two TIGIT and two PVR molecules. Binds with lower affinity to NECTIN2 and NECTIN3. Interacts with GRB2. Interacts with NECTIN4.

It localises to the cell membrane. Functionally, inhibitory receptor that plays a role in the modulation of immune responses. Suppresses T-cell activation by promoting the generation of mature immunoregulatory dendritic cells. Upon binding to its ligands PVR/CD155 or NECTIN2/CD112, which are expressed on antigen-presenting cells, sends inhibitory signals to the T-cell or NK cell. Mechanistically, interaction with ligand leads to phosphorylation of the cytoplasmic tail by Src family tyrosine kinases such as FYN or LCK, allowing subsequent binding to adapter GRB2 and SHIP1/INPP5D. In turn, inhibits PI3K and MAPK signaling cascades. In addition, associates with beta-arrestin-2/ARRB2 to recruit SHIP1/INPP5D that suppresses autoubiquitination of TRAF6 and subsequently inhibits NF-kappa-B signaling pathway. Also acts as a receptor for NECTIN4 to inhibit NK cell cytotoxicity. This Mus musculus (Mouse) protein is T-cell immunoreceptor with Ig and ITIM domains.